The primary structure comprises 240 residues: Glyceraldehyde 3-phosphate phosphatase (240 aa).

Belongs to the HAD-like hydrolase superfamily. It depends on Mg(2+) as a cofactor.

Functionally, catalyzes the dephosphorylation of D,L-glyceraldehyde 3-phosphate in vitro. This is Glyceraldehyde 3-phosphate phosphatase from Pyrococcus furiosus (strain ATCC 43587 / DSM 3638 / JCM 8422 / Vc1).